A 543-amino-acid chain; its full sequence is Probable bifunctional tRNA threonylcarbamoyladenosine biosynthesis protein (543 aa).

Residues 1–329 (MDISKDLICI…YRSDMVEVNW (329 aa)) form a kae1 region. Positions 112, 116, and 133 each coordinate Fe cation. Residues 133–137 (YVSGG), aspartate 165, glycine 178, glutamate 182, and asparagine 262 contribute to the L-threonylcarbamoyladenylate site. Fe cation is bound at residue aspartate 290. A Protein kinase domain is found at 342 to 543 (IIPEHLIGKG…KEVEKRARYL (202 aa)). ATP is bound by residues 348-356 (IGKGAEADI) and lysine 369. Catalysis depends on aspartate 461, which acts as the Proton acceptor; for kinase activity.

This sequence in the N-terminal section; belongs to the KAE1 / TsaD family. The protein in the C-terminal section; belongs to the protein kinase superfamily. Tyr protein kinase family. BUD32 subfamily. Component of the KEOPS complex that consists of Kae1, Bud32, Cgi121 and Pcc1; the whole complex dimerizes. Fe(2+) serves as cofactor.

It localises to the cytoplasm. It catalyses the reaction L-seryl-[protein] + ATP = O-phospho-L-seryl-[protein] + ADP + H(+). It carries out the reaction L-threonyl-[protein] + ATP = O-phospho-L-threonyl-[protein] + ADP + H(+). The catalysed reaction is L-threonylcarbamoyladenylate + adenosine(37) in tRNA = N(6)-L-threonylcarbamoyladenosine(37) in tRNA + AMP + H(+). Required for the formation of a threonylcarbamoyl group on adenosine at position 37 (t(6)A37) in tRNAs that read codons beginning with adenine. Is a component of the KEOPS complex that is probably involved in the transfer of the threonylcarbamoyl moiety of threonylcarbamoyl-AMP (TC-AMP) to the N6 group of A37. The Kae1 domain likely plays a direct catalytic role in this reaction. The Bud32 domain probably displays kinase activity that regulates Kae1 function. The sequence is that of Probable bifunctional tRNA threonylcarbamoyladenosine biosynthesis protein from Methanococcus maripaludis (strain C6 / ATCC BAA-1332).